Consider the following 280-residue polypeptide: MGRPPCCDKIGIKKGPWTPEEDIILVSYIQEHGPGNWRSVPTNTGLLRCSKSCRLRWTNYLRPGIKRGNFTPHEEGMIIHLQALLGNKWASIASYLPQRTDNDIKNYWNTHLKKKLNKSDSDERSRSENIALQTSSTRNTINHRSTYASSTENISRLLEGWMRASPKSSTSTTFLEHKMQNRTNNFIDHHSDQFPYEQLQGSWEEGHSKGINGDDDQGIKNSENNNGDDVHHEDGDHEDDDDHNATPPLTFIEKWLLEETSTTGGQMEEMSHLMELSNML.

2 HTH myb-type domains span residues 9-65 (KIGI…RPGI) and 66-116 (KRGN…KKKL). DNA-binding regions (H-T-H motif) lie at residues 37 to 61 (WRSVPTNTGLLRCSKSCRLRWTNYL) and 89 to 112 (WASIASYLPQRTDNDIKNYWNTHL). An S-nitrosocysteine mark is found at cysteine 49 and cysteine 53. A compositionally biased stretch (basic and acidic residues) spans 118-127 (KSDSDERSRS). Disordered regions lie at residues 118–149 (KSDSDERSRSENIALQTSSTRNTINHRSTYAS) and 204–247 (EEGH…NATP). Positions 128 to 149 (ENIALQTSSTRNTINHRSTYAS) are enriched in polar residues.

As to expression, specifically expressed in guard cells. Present in seedlings, leaves, stems and flowers.

It is found in the nucleus. Functionally, transcription factor involved in the regulation of gene (e.g. drought-regulated and flavonoid biosynthetic genes) expression and stomatal movements leading to negative regulation of responses to drought and responses to other physiological stimuli (e.g. light). Promotes guard cell deflation in response to water deficit. Triggers root growth upon osmotic stress (e.g. mannitol containing medium). In Arabidopsis thaliana (Mouse-ear cress), this protein is Transcription factor MYB60.